The chain runs to 270 residues: Transmembrane protein 176B (270 aa).

The next 4 membrane-spanning stretches (helical) occupy residues 65-85, 95-115, 127-147, and 209-229; these read LALG…GVCL, ASGC…GAIV, ISSL…VLCV, and LFLA…GVGL. Residues S236, S245, S254, and S258 each carry the phosphoserine modification. The tract at residues 237–270 is disordered; that stretch reads SQPLNEEGSEKRLLGENSVPPSPSREQTSTAIVL. Residues 260 to 270 show a composition bias toward polar residues; that stretch reads SREQTSTAIVL.

This sequence belongs to the TMEM176 family. In terms of tissue distribution, expressed in lung and dermal fibroblasts.

It localises to the nucleus membrane. Its function is as follows. May play a role in the process of maturation of dendritic cells. Required for the development of cerebellar granule cells. The sequence is that of Transmembrane protein 176B (TMEM176B) from Homo sapiens (Human).